Consider the following 51-residue polypeptide: Large ribosomal subunit protein eL39 (51 aa).

Belongs to the eukaryotic ribosomal protein eL39 family.

This chain is Large ribosomal subunit protein eL39, found in Saccharolobus islandicus (strain Y.N.15.51 / Yellowstone #2) (Sulfolobus islandicus).